Consider the following 465-residue polypeptide: Hexokinase-4 (465 aa).

A Hexokinase domain is found at 10–454 (ATKKEKVEQI…SGRGAALVSA (445 aa)). Residues 67–203 (EGSEVGDFLS…DFEMDVVAMV (137 aa)) form a hexokinase small subdomain region. Residue 78 to 83 (DLGGTN) coordinates ATP. Residues 151–152 (SF), 168–169 (TK), and 204–205 (ND) contribute to the substrate site. A hexokinase large subdomain region spans residues 204–443 (NDTVATMISC…CEITFIESEE (240 aa)). Residue Thr-228 coordinates ATP. Substrate contacts are provided by Asn-231, Glu-256, and Glu-290. ATP is bound by residues 295–296 (GK), 332–336 (TRFVS), and 411–415 (SVYKL).

Belongs to the hexokinase family. As to quaternary structure, monomer. Interacts with MIDN; the interaction occurs preferentially at low glucose levels and results in inhibition of hexokinase activity. Interacts with GCKR; leading to sequestration in the nucleus. As to expression, expression is restricted to the liver and pancreatic islets (at protein level).

The protein localises to the cytoplasm. The protein resides in the nucleus. Its subcellular location is the mitochondrion. It carries out the reaction a D-hexose + ATP = a D-hexose 6-phosphate + ADP + H(+). The catalysed reaction is D-fructose + ATP = D-fructose 6-phosphate + ADP + H(+). It catalyses the reaction D-glucose + ATP = D-glucose 6-phosphate + ADP + H(+). The enzyme catalyses D-mannose + ATP = D-mannose 6-phosphate + ADP + H(+). It participates in carbohydrate metabolism; hexose metabolism. Its pathway is carbohydrate degradation; glycolysis; D-glyceraldehyde 3-phosphate and glycerone phosphate from D-glucose: step 1/4. Subject to allosteric regulation. Low glucose and high fructose-6-phosphate triggers association with the inhibitor GCKR followed by sequestration in the nucleus. In terms of biological role, catalyzes the phosphorylation of hexose, such as D-glucose, D-fructose and D-mannose, to hexose 6-phosphate (D-glucose 6-phosphate, D-fructose 6-phosphate and D-mannose 6-phosphate, respectively). Compared to other hexokinases, has a weak affinity for D-glucose, and is effective only when glucose is abundant. Mainly expressed in pancreatic beta cells and the liver and constitutes a rate-limiting step in glucose metabolism in these tissues. Since insulin secretion parallels glucose metabolism and the low glucose affinity of GCK ensures that it can change its enzymatic activity within the physiological range of glucose concentrations, GCK acts as a glucose sensor in the pancreatic beta cell. In pancreas, plays an important role in modulating insulin secretion. In liver, helps to facilitate the uptake and conversion of glucose by acting as an insulin-sensitive determinant of hepatic glucose usage. Required to provide D-glucose 6-phosphate for the synthesis of glycogen. Mediates the initial step of glycolysis by catalyzing phosphorylation of D-glucose to D-glucose 6-phosphate. This Rattus norvegicus (Rat) protein is Hexokinase-4.